The sequence spans 260 residues: Indole-3-glycerol phosphate synthase (260 aa).

The protein belongs to the TrpC family.

It catalyses the reaction 1-(2-carboxyphenylamino)-1-deoxy-D-ribulose 5-phosphate + H(+) = (1S,2R)-1-C-(indol-3-yl)glycerol 3-phosphate + CO2 + H2O. Its pathway is amino-acid biosynthesis; L-tryptophan biosynthesis; L-tryptophan from chorismate: step 4/5. The polypeptide is Indole-3-glycerol phosphate synthase (Neisseria gonorrhoeae (strain NCCP11945)).